Reading from the N-terminus, the 175-residue chain is Epididymal-specific lipocalin-8 (175 aa).

The signal sequence occupies residues methionine 1–serine 22. N-linked (GlcNAc...) asparagine glycans are attached at residues asparagine 66 and asparagine 74. A disulfide bridge links cysteine 79 with cysteine 166.

This sequence belongs to the calycin superfamily. Lipocalin family. Predominantly expressed in epididymis.

The protein resides in the secreted. In terms of biological role, may play a role in male fertility. May act as a retinoid carrier protein within the epididymis. This Mus musculus (Mouse) protein is Epididymal-specific lipocalin-8 (Lcn8).